The following is a 100-amino-acid chain: NADH-quinone oxidoreductase subunit K (100 aa).

The next 3 membrane-spanning stretches (helical) occupy residues 4–24 (LQHGLILAAILFVLGLTGLLV), 28–48 (LLFMLISLEVMINAAALAFIV), and 60–80 (VMYILAISLAAAEASIGLALL).

Belongs to the complex I subunit 4L family. In terms of assembly, NDH-1 is composed of 13 different subunits. Subunits NuoA, H, J, K, L, M, N constitute the membrane sector of the complex.

It localises to the cell inner membrane. It catalyses the reaction a quinone + NADH + 5 H(+)(in) = a quinol + NAD(+) + 4 H(+)(out). Functionally, NDH-1 shuttles electrons from NADH, via FMN and iron-sulfur (Fe-S) centers, to quinones in the respiratory chain. The immediate electron acceptor for the enzyme in this species is believed to be ubiquinone. Couples the redox reaction to proton translocation (for every two electrons transferred, four hydrogen ions are translocated across the cytoplasmic membrane), and thus conserves the redox energy in a proton gradient. This chain is NADH-quinone oxidoreductase subunit K, found in Serratia proteamaculans (strain 568).